A 201-amino-acid chain; its full sequence is MAHGPRYRVPFRRRREGKTNYHKRLKLLKSKKPRLVVRKTLNHHIAQIVVYDPKGDKTLVSAHTMELMRDFGWKGHGGNTPSAYLLGLLIGYKAKQAGIEEAILDIGLHPPTRGSSIFAVLKGAVDAGLNVPHSEEIYPEDYRINGEHIANYAKALKEEDEALYRKQFSGYLVKGLEPEKLPEHFEEVKAKIIEKFEGARE.

It belongs to the universal ribosomal protein uL18 family. As to quaternary structure, part of the 50S ribosomal subunit. Contacts the 5S and 23S rRNAs.

In terms of biological role, this is one of the proteins that bind and probably mediate the attachment of the 5S RNA into the large ribosomal subunit, where it forms part of the central protuberance. In Thermococcus kodakarensis (strain ATCC BAA-918 / JCM 12380 / KOD1) (Pyrococcus kodakaraensis (strain KOD1)), this protein is Large ribosomal subunit protein uL18.